Here is an 89-residue protein sequence, read N- to C-terminus: UPF0297 protein lp_2275 (89 aa).

It belongs to the UPF0297 family.

The protein is UPF0297 protein lp_2275 of Lactiplantibacillus plantarum (strain ATCC BAA-793 / NCIMB 8826 / WCFS1) (Lactobacillus plantarum).